Here is a 501-residue protein sequence, read N- to C-terminus: MDALLQLKGIDKAFPGVKALSGAALNVYPGRVMALVGENGAGKSTMMKVLTGIYTRDAGSLLWLGKETTFNGPKSSQEAGIGIIHQELNLIPQLTIAENIFLGREFVNRFGKIDWKKMYAEADHLLAKLNLRFKSDKLVGELSIGDQQMVEIAKVLSFESKVIIMDEPTDALTDTETDSLFRVIRELKSQGRGIVYISHRMKEIFEICDDVTVFRDGQFIAEREVATLTEDSLIEMMVGRKLEDQYPHLDNAPGEIRLKVDNLCGPGVNDVSFVLRKGEILGISGLMGAGRTELMKVLYGAMPRTSGYVTLDGHEVVTRSPQDGLANGIVYISEDRKRDGLVLGMSVKENMSLTALDYFSRAGGSLKHKDEQQAVGDFIRLFNVKTPSMEQAIGLLSGGNQQKVAIARGLMTRPKVLILDEPTRGVDVGAKKEIYQLINQFKADGLSIILVSSEMPEVLGMSDRIIVMHEGHLSGEFTREQATQEVLMAAAVGKLNRVNQE.

ABC transporter domains follow at residues 5–241 and 252–495; these read LQLK…VGRK and APGE…VGKL. 37 to 44 serves as a coordination point for ATP; it reads GENGAGKS.

The protein belongs to the ABC transporter superfamily. Ribose importer (TC 3.A.1.2.1) family. As to quaternary structure, the complex is composed of an ATP-binding protein (RbsA), two transmembrane proteins (RbsC) and a solute-binding protein (RbsB).

Its subcellular location is the cell inner membrane. It carries out the reaction D-ribose(out) + ATP + H2O = D-ribose(in) + ADP + phosphate + H(+). Its function is as follows. Part of the ABC transporter complex RbsABC involved in ribose import. Responsible for energy coupling to the transport system. The protein is Ribose import ATP-binding protein RbsA of Salmonella typhimurium (strain LT2 / SGSC1412 / ATCC 700720).